Consider the following 636-residue polypeptide: Probable potassium transport system protein Kup (636 aa).

12 consecutive transmembrane segments (helical) span residues 23–43 (MALM…SPLY), 57–77 (PAHV…VVSL), 111–131 (WLLI…SMIT), 148–168 (HTLE…LFAI), 179–199 (LFGP…GYQI), 217–237 (FIAE…LALT), 258–278 (WFAM…ALLL), 287–307 (PFFL…ATVA), 348–368 (IYLP…VLLF), 377–397 (AYGF…FAVL), 409–429 (WMVL…ANIF), and 431–451 (IHEG…LMMT).

This sequence belongs to the HAK/KUP transporter (TC 2.A.72) family.

The protein resides in the cell inner membrane. It carries out the reaction K(+)(in) + H(+)(in) = K(+)(out) + H(+)(out). Transport of potassium into the cell. Likely operates as a K(+):H(+) symporter. This chain is Probable potassium transport system protein Kup, found in Bordetella bronchiseptica (strain ATCC BAA-588 / NCTC 13252 / RB50) (Alcaligenes bronchisepticus).